A 217-amino-acid polypeptide reads, in one-letter code: Mediator of RNA polymerase II transcription subunit 18 (217 aa).

Belongs to the Mediator complex subunit 18 family. As to quaternary structure, component of the Mediator complex, which includes at least CDK8, MED4, MED6, MED11, MED14, MED17, MED18, MED20, MED21, MED22, MED27, MED28, MED30 and MED31.

The protein resides in the nucleus. In terms of biological role, component of the Mediator complex, a coactivator involved in the regulated transcription of nearly all RNA polymerase II-dependent genes. Mediator functions as a bridge to convey information from gene-specific regulatory proteins to the basal RNA polymerase II transcription machinery. Mediator is recruited to promoters by direct interactions with regulatory proteins and serves as a scaffold for the assembly of a functional preinitiation complex with RNA polymerase II and the general transcription factors. In Drosophila melanogaster (Fruit fly), this protein is Mediator of RNA polymerase II transcription subunit 18 (MED18).